The sequence spans 213 residues: Orotate phosphoribosyltransferase (213 aa).

A 5-phospho-alpha-D-ribose 1-diphosphate-binding site is contributed by K25. Orotate is bound at residue 33 to 34 (FF). 5-phospho-alpha-D-ribose 1-diphosphate contacts are provided by residues 71-72 (YK), R98, K99, K102, H104, and 124-132 (DDVITSGTA). Residues T128 and R156 each coordinate orotate.

The protein belongs to the purine/pyrimidine phosphoribosyltransferase family. PyrE subfamily. Homodimer. Mg(2+) is required as a cofactor.

It carries out the reaction orotidine 5'-phosphate + diphosphate = orotate + 5-phospho-alpha-D-ribose 1-diphosphate. Its pathway is pyrimidine metabolism; UMP biosynthesis via de novo pathway; UMP from orotate: step 1/2. Functionally, catalyzes the transfer of a ribosyl phosphate group from 5-phosphoribose 1-diphosphate to orotate, leading to the formation of orotidine monophosphate (OMP). The polypeptide is Orotate phosphoribosyltransferase (Buchnera aphidicola subsp. Acyrthosiphon pisum (strain 5A)).